We begin with the raw amino-acid sequence, 328 residues long: Zinc chaperone YeiR (328 aa).

9–17 (GFLGSGKTT) provides a ligand contact to GTP. The CXCC motif signature appears at 63-66 (CMCC). D155 is a binding site for GTP. Residues 241–321 (CGWIFDADTV…WNALQSALLK (81 aa)) enclose the CobW C-terminal domain.

Belongs to the SIMIBI class G3E GTPase family. ZNG1 subfamily. Oligomerizes in the presence of Zn(2+).

It carries out the reaction GTP + H2O = GDP + phosphate + H(+). GTPase activity is enhanced by Zn(2+) binding. Functionally, zinc chaperone that directly transfers zinc cofactor to target proteins, thereby activating them. Zinc is transferred from the CXCC motif in the GTPase domain to the zinc binding site in target proteins in a process requiring GTP hydrolysis. The protein is Zinc chaperone YeiR (yeiR) of Escherichia coli (strain K12).